The following is a 202-amino-acid chain: MHNAPESVFNALVPMVVEQTAKGERSYDIYSRLLKERVIFLVGQVEEHMANLIVAQLLFLESENPDKEIYLYINSPGGSVTAGMAIYDTMQFIKPKVSTVCIGQACSMGAFLLAGGEKGMRHCLPNSRVMIHQPLGGFQGQASDIAIHAQEILGIKHKLNQMLSHHTGQPMEVIERDTDRDNFMSATQAVEYGLIDSVLTSR.

The Nucleophile role is filled by Ser107. Residue His132 is part of the active site.

It belongs to the peptidase S14 family. Fourteen ClpP subunits assemble into 2 heptameric rings which stack back to back to give a disk-like structure with a central cavity, resembling the structure of eukaryotic proteasomes.

The protein resides in the cytoplasm. The enzyme catalyses Hydrolysis of proteins to small peptides in the presence of ATP and magnesium. alpha-casein is the usual test substrate. In the absence of ATP, only oligopeptides shorter than five residues are hydrolyzed (such as succinyl-Leu-Tyr-|-NHMec, and Leu-Tyr-Leu-|-Tyr-Trp, in which cleavage of the -Tyr-|-Leu- and -Tyr-|-Trp bonds also occurs).. Cleaves peptides in various proteins in a process that requires ATP hydrolysis. Has a chymotrypsin-like activity. Plays a major role in the degradation of misfolded proteins. The protein is ATP-dependent Clp protease proteolytic subunit of Shewanella amazonensis (strain ATCC BAA-1098 / SB2B).